Reading from the N-terminus, the 161-residue chain is Nucleotide-binding protein Vapar_3769 (161 aa).

Belongs to the YajQ family.

Nucleotide-binding protein. The chain is Nucleotide-binding protein Vapar_3769 from Variovorax paradoxus (strain S110).